Consider the following 240-residue polypeptide: Large ribosomal subunit protein bL25 (240 aa).

Disordered regions lie at residues 1–20 and 204–240; these read MAEN…GPAR and GAAP…KAKK. Over residues 204-229 the composition is skewed to low complexity; the sequence is GAAPAAGAAAPAGGAAPAAGAAPAKG. A compositionally biased stretch (basic and acidic residues) spans 230 to 240; it reads GEAKGGDKAKK.

It belongs to the bacterial ribosomal protein bL25 family. CTC subfamily. In terms of assembly, part of the 50S ribosomal subunit; part of the 5S rRNA/L5/L18/L25 subcomplex. Contacts the 5S rRNA. Binds to the 5S rRNA independently of L5 and L18.

This is one of the proteins that binds to the 5S RNA in the ribosome where it forms part of the central protuberance. The protein is Large ribosomal subunit protein bL25 of Anaeromyxobacter sp. (strain K).